We begin with the raw amino-acid sequence, 466 residues long: Asparagine--tRNA ligase (466 aa).

The protein belongs to the class-II aminoacyl-tRNA synthetase family. As to quaternary structure, homodimer.

Its subcellular location is the cytoplasm. It catalyses the reaction tRNA(Asn) + L-asparagine + ATP = L-asparaginyl-tRNA(Asn) + AMP + diphosphate + H(+). The protein is Asparagine--tRNA ligase of Shewanella baltica (strain OS195).